The following is a 225-amino-acid chain: UPF0758 protein BAMEG_4721 (225 aa).

Residues S103–I225 enclose the MPN domain. Positions 174, 176, and 187 each coordinate Zn(2+). A JAMM motif motif is present at residues H174–D187.

It belongs to the UPF0758 family.

The sequence is that of UPF0758 protein BAMEG_4721 from Bacillus anthracis (strain CDC 684 / NRRL 3495).